The primary structure comprises 589 residues: (E)-beta-ocimene synthase, chloroplastic (589 aa).

Residues 1–25 (MAAHNLCFNSAFVCNVHHQKTQHFP) constitute a chloroplast transit peptide. (2E,6E)-farnesyl diphosphate-binding residues include R302, D339, D343, R480, and N483. The Mg(2+) site is built by D339 and D343. A DDXXD motif motif is present at residues 339–343 (DDIYD). The Mg(2+) site is built by N483, T487, and E491.

Belongs to the terpene synthase family. Tpsb subfamily. It depends on Mg(2+) as a cofactor. Mn(2+) is required as a cofactor. As to expression, expressed exclusively in flowers.

The protein localises to the plastid. It localises to the chloroplast. The catalysed reaction is (2E,6E)-farnesyl diphosphate = (3E,6E)-alpha-farnesene + diphosphate. The protein operates within secondary metabolite biosynthesis; terpenoid biosynthesis. Functionally, predominantly involved in monoterpene (C10) biosynthesis. Using GPP as substrate, the major product is (E)-beta-ocimene with minor amounts of (Z)-beta-ocimene and myrcene. Using FPP as substrate, could also be able to synthesize in vitro sesquiterpenes (C15) with (E,E)-alpha-farnesene as the major product and with (Z,E)-alpha-farnesene and (E,E)-beta-farnesene as minor products. The polypeptide is (E)-beta-ocimene synthase, chloroplastic (TPS02) (Arabidopsis thaliana (Mouse-ear cress)).